The primary structure comprises 599 residues: 1-deoxy-D-xylulose-5-phosphate synthase (599 aa).

Thiamine diphosphate is bound by residues H63 and 104–106 (GHS). D135 contacts Mg(2+). Residues 136 to 137 (GA), N164, Y271, and E352 contribute to the thiamine diphosphate site. N164 is a Mg(2+) binding site.

Belongs to the transketolase family. DXPS subfamily. In terms of assembly, homodimer. Mg(2+) is required as a cofactor. It depends on thiamine diphosphate as a cofactor.

The catalysed reaction is D-glyceraldehyde 3-phosphate + pyruvate + H(+) = 1-deoxy-D-xylulose 5-phosphate + CO2. It functions in the pathway metabolic intermediate biosynthesis; 1-deoxy-D-xylulose 5-phosphate biosynthesis; 1-deoxy-D-xylulose 5-phosphate from D-glyceraldehyde 3-phosphate and pyruvate: step 1/1. In terms of biological role, catalyzes the acyloin condensation reaction between C atoms 2 and 3 of pyruvate and glyceraldehyde 3-phosphate to yield 1-deoxy-D-xylulose-5-phosphate (DXP). The chain is 1-deoxy-D-xylulose-5-phosphate synthase from Nitratiruptor sp. (strain SB155-2).